A 147-amino-acid chain; its full sequence is uncharacterized protein (147 aa).

The segment at 30-102 is disordered; it reads GRCEQVALSS…TPPTRPESIF (73 aa). Residues 62–71 are compositionally biased toward polar residues; that stretch reads RPSTGETFVQ.

This is an uncharacterized protein from Homo sapiens (Human).